A 156-amino-acid chain; its full sequence is Transcription elongation factor GreA (156 aa).

The stretch at leucine 8–glutamate 75 forms a coiled coil.

The protein belongs to the GreA/GreB family.

In terms of biological role, necessary for efficient RNA polymerase transcription elongation past template-encoded arresting sites. The arresting sites in DNA have the property of trapping a certain fraction of elongating RNA polymerases that pass through, resulting in locked ternary complexes. Cleavage of the nascent transcript by cleavage factors such as GreA or GreB allows the resumption of elongation from the new 3'terminus. GreA releases sequences of 2 to 3 nucleotides. This is Transcription elongation factor GreA from Thermosipho melanesiensis (strain DSM 12029 / CIP 104789 / BI429).